The sequence spans 166 residues: Sperm-egg fusion protein TMEM95 (166 aa).

An N-terminal signal peptide occupies residues 1–16 (MWTLALGGIFLAAVEA). 4 cysteine pairs are disulfide-bonded: cysteine 17-cysteine 118, cysteine 20-cysteine 121, cysteine 105-cysteine 128, and cysteine 109-cysteine 134. Over 17–145 (CVFCRFPDRE…PGSHDLWEAR (129 aa)) the chain is Extracellular. The N-linked (GlcNAc...) asparagine glycan is linked to asparagine 117. A helical transmembrane segment spans residues 146–165 (ILLLFVCGTALLLGVPSLAV). Residue glutamate 166 is a topological domain, cytoplasmic.

This sequence belongs to the TMEM95 family. As to quaternary structure, does not interact with sperm-egg fusion proteins IZUMO1 or IZUMO1R/JUNO. In terms of processing, N-glycosylated. As to expression, detected in testis and brain with higher levels in brain than testis.

The protein resides in the cytoplasmic vesicle. It is found in the secretory vesicle. It localises to the acrosome membrane. In terms of biological role, sperm protein required for fusion of sperm with the egg membrane during fertilization. This is Sperm-egg fusion protein TMEM95 from Bos taurus (Bovine).